A 260-amino-acid polypeptide reads, in one-letter code: 3'-5' ssDNA/RNA exonuclease TatD (260 aa).

A divalent metal cation is bound by residues E92, H128, and H153.

Belongs to the metallo-dependent hydrolases superfamily. TatD-type hydrolase family. TatD subfamily. As to quaternary structure, monomer. Mg(2+) is required as a cofactor.

It is found in the cytoplasm. 3'-5' exonuclease that prefers single-stranded DNA and RNA. May play a role in the H(2)O(2)-induced DNA damage repair. This Pectobacterium parmentieri (strain WPP163) (Pectobacterium wasabiae (strain WPP163)) protein is 3'-5' ssDNA/RNA exonuclease TatD.